Consider the following 416-residue polypeptide: MTDMRRLGQRAKQASLLIAPLSTQIKNRFLSTLAKALVDDTQTLLAANQKDLANAKEHGISDIMMDRLRLTSERIKAIAQGVQQVADLADPIGQVIKGYTNLDGLKILQKRVPLGVIAMIFESRPNVSVDAFSLAFKTNNAIILRGGKDALYSNKALVKLIRQSLEESGITPDAVQLVEDPSHAVAEELMQATDYVDVLIPRGGAKLIQTVKEKAKVPVIETGVGNVHIYVDAQADLDMATKIVINAKTKRPSVCNAAEGLVIHEAVAARFIPMLEKAINQVQPVEWRADDKALPLFEQAVPAKAEDFETEFLDYIMSVKVVSSLEEAISWINQHTSHHSEAIITRDTKAAETFQDLVDAAAVYVNASTRFTDGFVFGLGAEIGISTQKIHARGPMGLEALTSTKFYINGDGHIRE.

Belongs to the gamma-glutamyl phosphate reductase family.

It is found in the cytoplasm. It carries out the reaction L-glutamate 5-semialdehyde + phosphate + NADP(+) = L-glutamyl 5-phosphate + NADPH + H(+). It functions in the pathway amino-acid biosynthesis; L-proline biosynthesis; L-glutamate 5-semialdehyde from L-glutamate: step 2/2. Catalyzes the NADPH-dependent reduction of L-glutamate 5-phosphate into L-glutamate 5-semialdehyde and phosphate. The product spontaneously undergoes cyclization to form 1-pyrroline-5-carboxylate. The sequence is that of Gamma-glutamyl phosphate reductase from Streptococcus pyogenes serotype M3 (strain ATCC BAA-595 / MGAS315).